The chain runs to 168 residues: Small ribosomal subunit protein uS5 (168 aa).

Residues 14–77 (FEERVVSINR…EAAKKNLITV (64 aa)) enclose the S5 DRBM domain.

The protein belongs to the universal ribosomal protein uS5 family. As to quaternary structure, part of the 30S ribosomal subunit. Contacts proteins S4 and S8.

Functionally, with S4 and S12 plays an important role in translational accuracy. In terms of biological role, located at the back of the 30S subunit body where it stabilizes the conformation of the head with respect to the body. In Lactococcus lactis subsp. cremoris (strain MG1363), this protein is Small ribosomal subunit protein uS5.